The sequence spans 258 residues: Aquaglyceroporin (258 aa).

The Cytoplasmic segment spans residues 1–16 (MKVTFGNEYIKNFLGE). The chain crosses the membrane as a helical span at residues 17 to 37 (FIGTFVLMFLGEGTTANHFAV). At 38-45 (PIKNDWLR) the chain is on the extracellular side. A helical membrane pass occupies residues 46 to 66 (LCIGWGLGVFFGILISAKLSG). The glycerol site is built by Ala-67 and Asn-70. Residues 67–87 (AHLNLAVTVGLSTIKKFNYKQ) lie on the Cytoplasmic side of the membrane. Residues 88-108 (IPLYFAGQLLGALSATASVYG) form a helical membrane-spanning segment. Residues 109–133 (LYYGFVSDQTIPKFSWETGKHANVH) lie on the Extracellular side of the membrane. A helical transmembrane segment spans residues 134–154 (IASAFMHEFILTGILLLIILS). The Cytoplasmic segment spans residues 155–171 (VTDENICGKFHVLKVSS). A helical membrane pass occupies residues 172–192 (IVGLAIICIGISFGGNTGFAL). Positions 189, 190, 193, and 196 each coordinate glycerol. Residues 193-217 (NPSRDLGARILSAIAYGFEAFTRDK) lie on the Extracellular side of the membrane. The helical transmembrane segment at 218-238 (CYFWIPLIAPIIGSIIFCQIY) threads the bilayer. Over 239-258 (DKIVAPLVVISEHDKGALEI) the chain is Cytoplasmic.

It belongs to the MIP/aquaporin (TC 1.A.8) family.

The protein resides in the cell membrane. It catalyses the reaction H2O(in) = H2O(out). It carries out the reaction glycerol(in) = glycerol(out). The catalysed reaction is urea(in) = urea(out). Mediates water and glycerol transport across the cell membrane. Permeable to urea. Required for efficient progression of parasites through the liver stages. The sequence is that of Aquaglyceroporin from Plasmodium berghei (strain Anka).